The chain runs to 479 residues: Neuronal acetylcholine receptor subunit alpha-9 (479 aa).

The N-terminal stretch at 1 to 22 is a signal peptide; sequence MNWSHSCISFCWIYFAASRLRA. Residues 23-238 lie on the Extracellular side of the membrane; that stretch reads AETADGKYAQ…FTLLLKRRSS (216 aa). A glycan (N-linked (GlcNAc...) asparagine) is linked at asparagine 57. A disulfide bridge links cysteine 155 with cysteine 169. The N-linked (GlcNAc...) asparagine glycan is linked to asparagine 170. Na(+)-binding residues include serine 191 and aspartate 193. A disulfide bond links cysteine 219 and cysteine 220. A run of 3 helical transmembrane segments spans residues 239-259, 269-289, and 303-323; these read FYIV…PLSF, VSLG…VAEI, and YIAT…VMNI. Over 324–457 the chain is Cytoplasmic; sequence HFCGAEARPV…WKKVAKVIDR (134 aa). The chain crosses the membrane as a helical span at residues 458 to 478; that stretch reads FFMWIFFIMVFVMTILIIARA.

It belongs to the ligand-gated ion channel (TC 1.A.9) family. Acetylcholine receptor (TC 1.A.9.1) subfamily. Alpha-9/CHRNA9 sub-subfamily. In terms of assembly, forms homo- or heteropentameric channels in conjunction with CHRNA10. The native outer hair cell receptor is composed of CHRNA9:CHRNA10 heterooligomers. Found in the stoichiometric form (CHRNA9)2:(CHRNA10)3. Post-translationally, N-glycosylated. In terms of tissue distribution, expressed in cochlea, keratinocytes, pituitary gland, B-cells and T-cells.

The protein resides in the synaptic cell membrane. It is found in the cell membrane. The catalysed reaction is Ca(2+)(in) = Ca(2+)(out). The enzyme catalyses K(+)(in) = K(+)(out). It carries out the reaction Na(+)(in) = Na(+)(out). It catalyses the reaction Mg(2+)(in) = Mg(2+)(out). Activated by a myriad of ligands such as acetylcholine. AChR activity is inhibited by the antagonist alpha-conotoxins RgIA and GeXXA, small disulfide-constrained peptides from cone snails. In terms of biological role, component of neuronal acetylcholine receptors (nAChRs) that function as pentameric, ligand-gated cation channels with high calcium permeability among other activities. nAChRs are excitatory neurotrasnmitter receptors formed by a collection of nAChR subunits known to mediate synaptic transmission in the nervous system and the neuromuscular junction. Each nAchR subunit confers differential attributes to channel properties, including activation, deactivation and desensitization kinetics, pH sensitivity, cation permeability, and binding to allosteric modulators. Forms either homopentamers or heteropentamers with CHRNA10. Expressed in the inner ear, in sympathetic neurons and in other non-neuronal cells, such as skin keratinocytes and lymphocytes. nAChR formed by CHRNA9:CHRNA10 mediate central nervous system control of auditory and vestibular sensory processing. The channel is permeable to a range of divalent cations including calcium, the influx of which may activate a potassium current which hyperpolarizes the cell membrane. In the ear, mediates synaptic transmission between efferent olivocochlear fibers and hair cells of the cochlea, this may lead to a reduction in basilar membrane motion, altering the activity of auditory nerve fibers and reducing the range of dynamic hearing. This may protect against acoustic trauma. May also regulate keratinocyte adhesion. The chain is Neuronal acetylcholine receptor subunit alpha-9 from Homo sapiens (Human).